Reading from the N-terminus, the 259-residue chain is Phosphatidylglycerol--prolipoprotein diacylglyceryl transferase (259 aa).

Transmembrane regions (helical) follow at residues 9–29 (LGPLAIRWYSICIVTGLILAV), 48–68 (DFILIAFPLAIVGARLYYVIF), 83–103 (IWHGGIAIYGGLLTGALVLFI), 114–133 (DFLDVATPGVMLAQSIGRWG), 167–187 (TPTFLYESLWNLLGFIIIMIL), 197–217 (GEVAFFYLIWYGSGRFVIEGM), and 227–247 (LRVSQWLSVLLVVVGVILIVI). Residue Arg131 coordinates a 1,2-diacyl-sn-glycero-3-phospho-(1'-sn-glycerol).

It belongs to the Lgt family.

It localises to the cell membrane. It catalyses the reaction L-cysteinyl-[prolipoprotein] + a 1,2-diacyl-sn-glycero-3-phospho-(1'-sn-glycerol) = an S-1,2-diacyl-sn-glyceryl-L-cysteinyl-[prolipoprotein] + sn-glycerol 1-phosphate + H(+). The protein operates within protein modification; lipoprotein biosynthesis (diacylglyceryl transfer). Its function is as follows. Catalyzes the transfer of the diacylglyceryl group from phosphatidylglycerol to the sulfhydryl group of the N-terminal cysteine of a prolipoprotein, the first step in the formation of mature lipoproteins. This chain is Phosphatidylglycerol--prolipoprotein diacylglyceryl transferase, found in Streptococcus mutans serotype c (strain ATCC 700610 / UA159).